Consider the following 242-residue polypeptide: tRNA pseudouridine synthase A (242 aa).

Residue aspartate 51 is the Nucleophile of the active site. Position 107 (tyrosine 107) interacts with substrate.

Belongs to the tRNA pseudouridine synthase TruA family. In terms of assembly, homodimer.

It carries out the reaction uridine(38/39/40) in tRNA = pseudouridine(38/39/40) in tRNA. Functionally, formation of pseudouridine at positions 38, 39 and 40 in the anticodon stem and loop of transfer RNAs. The sequence is that of tRNA pseudouridine synthase A from Helicobacter pylori (strain Shi470).